Reading from the N-terminus, the 283-residue chain is CDP-abequose synthase (283 aa).

Residues 7-13 (GGSGYIG), 48-49 (EF), Tyr-129, and Lys-133 contribute to the NAD(+) site. The active-site Proton acceptor is Tyr-129.

Belongs to the NAD(P)-dependent epimerase/dehydratase family.

It carries out the reaction CDP-alpha-D-abequose + NADP(+) = CDP-4-dehydro-3,6-dideoxy-alpha-D-glucose + NADPH + H(+). It functions in the pathway bacterial outer membrane biogenesis; LPS O-antigen biosynthesis. Functionally, the CDP-abequose synthase is involved in lipopolysaccharides (LPS) synthesis containing abequose which are important antigens of the cell surface responsible for the serological O specificity. Derivatives of the 3,6-dideoxyhexose group have a particular highly immunogenic character. This chain is CDP-abequose synthase (rfbJ), found in Yersinia pseudotuberculosis.